The sequence spans 382 residues: MKITKLTTYRLPPRWMFLKIETDEGVVGWGEPVIEGRARTVEAAVHELGEYLIGQDPARINDLWQVMYRGGFYRGGPILMSAIAGIDQALWDIKGKVLNAPVWQLMGGLVRDKIKAYSWVGGDRPAEVIAGIKTLRQIGFDTFKLNGCEELGIIDDSRKVDAAVNTVAQIREEFGSDIEFGLDFHGRVSAPMAKILIKELEPYRPLFIEEPVLAEQAEYYPRLAAQTHIPIAAGERMFSRFEFKRVLEAGGLAILQPDLSHAGGITECAKIAAMAEAYDVGLAPHCPLGPIALAACLHVDFISRNAVFQEQSMGIHYNQGAELLDFVKNKDDFKMEGGYFQPLMKPGLGVEIDEEQVVARSQGCADWRNPLWRHADGSVAEW.

Residue Asp183 participates in Mg(2+) binding. Residue His185 is the Proton donor of the active site. Positions 209 and 235 each coordinate Mg(2+). His285 acts as the Proton acceptor in catalysis.

It belongs to the mandelate racemase/muconate lactonizing enzyme family. GalD subfamily. Requires Mg(2+) as cofactor.

It carries out the reaction D-galactonate = 2-dehydro-3-deoxy-D-galactonate + H2O. The protein operates within carbohydrate acid metabolism; D-galactonate degradation; D-glyceraldehyde 3-phosphate and pyruvate from D-galactonate: step 1/3. Functionally, catalyzes the dehydration of D-galactonate to 2-keto-3-deoxy-D-galactonate. The polypeptide is D-galactonate dehydratase (Cronobacter sakazakii (strain ATCC BAA-894) (Enterobacter sakazakii)).